Reading from the N-terminus, the 398-residue chain is Acetate kinase (398 aa).

Mg(2+) is bound at residue N9. Residue K16 participates in ATP binding. R93 lines the substrate pocket. D150 functions as the Proton donor/acceptor in the catalytic mechanism. Residues 209–213 (HLGAG), 284–286 (DMR), and 329–333 (GIGEH) each bind ATP. Position 382 (E382) interacts with Mg(2+).

Belongs to the acetokinase family. As to quaternary structure, homodimer. The cofactor is Mg(2+). Requires Mn(2+) as cofactor.

Its subcellular location is the cytoplasm. The catalysed reaction is acetate + ATP = acetyl phosphate + ADP. The protein operates within metabolic intermediate biosynthesis; acetyl-CoA biosynthesis; acetyl-CoA from acetate: step 1/2. Its function is as follows. Catalyzes the formation of acetyl phosphate from acetate and ATP. Can also catalyze the reverse reaction. The chain is Acetate kinase from Rhodopseudomonas palustris (strain ATCC BAA-98 / CGA009).